We begin with the raw amino-acid sequence, 512 residues long: Probable ubiquitin carboxyl-terminal hydrolase 3 (512 aa).

A disordered region spans residues 64-109; sequence TSKTKESEKSPKSWSAIAKKHVQGDSPVKKSHSVPVPSDRSEKKSF. Residues 133 to 511 enclose the USP domain; it reads RGFINTGNIC…VAYLLFYTRR (379 aa). Cys142 serves as the catalytic Nucleophile. His453 serves as the catalytic Proton acceptor.

Belongs to the peptidase C19 family.

It carries out the reaction Thiol-dependent hydrolysis of ester, thioester, amide, peptide and isopeptide bonds formed by the C-terminal Gly of ubiquitin (a 76-residue protein attached to proteins as an intracellular targeting signal).. This is Probable ubiquitin carboxyl-terminal hydrolase 3 (ubp3) from Schizosaccharomyces pombe (strain 972 / ATCC 24843) (Fission yeast).